The sequence spans 401 residues: MSDPIITFDHVVKEFKTRGRGANIARAVDDVSLTIDRGDIFGIIGYSGAGKSTLVRLINALERPTSGTVTVLGTDITSLSETKLRPIRQKIGMIFQQFNLFSTKTVAQNIAYPLQLDHWRKDYQDRRVNELLEFVGLSEHANKYPSQLSGGQKQRVGIARALATNPEILLADEATSALDPETTTEVLALLKRVNEEFGITIVLITHQMNVVQQIAGRVAVMSAGRVVESGDVYDVFAAPQQPVTKRFIATALSGLPEEDRVERLHHEWSGRIVTVLIRQKDVSGTQGHELKASGQNISELIAKYGVESSLLYGGIDTVKGTAIGAITYEFNGPGWHVDEFLRELAANSDVIDFGTAAKPVAYADAVAGHASYAEDRAHDPLAADTATAPAASAAAHEGANA.

In terms of domain architecture, ABC transporter spans 6–248 (ITFDHVVKEF…PQQPVTKRFI (243 aa)). 45-52 (GYSGAGKS) provides a ligand contact to ATP.

It belongs to the ABC transporter superfamily. Methionine importer (TC 3.A.1.24) family. In terms of assembly, the complex is composed of two ATP-binding proteins (MetN), two transmembrane proteins (MetI) and a solute-binding protein (MetQ).

It is found in the cell membrane. The enzyme catalyses L-methionine(out) + ATP + H2O = L-methionine(in) + ADP + phosphate + H(+). It catalyses the reaction D-methionine(out) + ATP + H2O = D-methionine(in) + ADP + phosphate + H(+). Part of the ABC transporter complex MetNIQ involved in methionine import. Responsible for energy coupling to the transport system. The chain is Methionine import ATP-binding protein MetN from Bifidobacterium longum (strain NCC 2705).